We begin with the raw amino-acid sequence, 93 residues long: Cobalt transport protein CbiN (93 aa).

Transmembrane regions (helical) follow at residues 5–25 and 63–83; these read LMLLAMVVALVILPFFINHGG and LLFTLQGSLGAAVIFYILGYC.

The protein belongs to the CbiN family. As to quaternary structure, forms an energy-coupling factor (ECF) transporter complex composed of an ATP-binding protein (A component, CbiO), a transmembrane protein (T component, CbiQ) and 2 possible substrate-capture proteins (S components, CbiM and CbiN) of unknown stoichimetry.

It localises to the cell inner membrane. It functions in the pathway cofactor biosynthesis; adenosylcobalamin biosynthesis. Part of the energy-coupling factor (ECF) transporter complex CbiMNOQ involved in cobalt import. The chain is Cobalt transport protein CbiN from Salmonella choleraesuis (strain SC-B67).